The following is a 317-amino-acid chain: tRNA dimethylallyltransferase (317 aa).

14-21 (GPTAVGKT) serves as a coordination point for ATP. 16-21 (TAVGKT) contacts substrate. The interval 39–42 (DSMQ) is interaction with substrate tRNA.

It belongs to the IPP transferase family. As to quaternary structure, monomer. The cofactor is Mg(2+).

It catalyses the reaction adenosine(37) in tRNA + dimethylallyl diphosphate = N(6)-dimethylallyladenosine(37) in tRNA + diphosphate. Functionally, catalyzes the transfer of a dimethylallyl group onto the adenine at position 37 in tRNAs that read codons beginning with uridine, leading to the formation of N6-(dimethylallyl)adenosine (i(6)A). The sequence is that of tRNA dimethylallyltransferase from Bacillus mycoides (strain KBAB4) (Bacillus weihenstephanensis).